Here is a 512-residue protein sequence, read N- to C-terminus: UDP-N-acetylmuramate--L-alanine ligase (512 aa).

132 to 138 (GAHGKTT) contacts ATP.

Belongs to the MurCDEF family.

The protein localises to the cytoplasm. It catalyses the reaction UDP-N-acetyl-alpha-D-muramate + L-alanine + ATP = UDP-N-acetyl-alpha-D-muramoyl-L-alanine + ADP + phosphate + H(+). The protein operates within cell wall biogenesis; peptidoglycan biosynthesis. In terms of biological role, cell wall formation. This Bifidobacterium longum subsp. infantis (strain ATCC 15697 / DSM 20088 / JCM 1222 / NCTC 11817 / S12) protein is UDP-N-acetylmuramate--L-alanine ligase.